Reading from the N-terminus, the 409-residue chain is AP-1-like transcription factor YAP2 (409 aa).

2 consecutive short sequence motifs (bipartite nuclear localization signal) follow at residues 17–24 and 47–54; these read MKKQMLLN and SRRTAQNR. The interval 26 to 64 is disordered; that stretch reads DGTPKRKVGRPGRKRIDSEAKSRRTAQNRAAQRAFRDRK. Positions 43 to 106 constitute a bZIP domain; it reads SEAKSRRTAQ…KSLLSEITKY (64 aa). Positions 46 to 69 are basic motif; it reads KSRRTAQNRAAQRAFRDRKEAKMK. The tract at residues 71 to 99 is leucine-zipper; that stretch reads LQERVELLEQKDAQNKTTTDFLLCSLKSL. Residues 127–156 are disordered; sequence QKRENEKGTSTAVSKAAKELPSPNSDENMT. The c-CRD stretch occupies residues 356–387; that stretch reads CYHILEEISSLPKYSSLDIDDLCSELIIKAKC. Residues 372-379 carry the Nuclear export signal motif; the sequence is LDIDDLCS.

Belongs to the bZIP family. YAP subfamily. Homodimer; disulfide-linked, upon oxidation. Interacts in the nucleus with the nuclear export protein CRM1. Interacts with RCK1. Post-translationally, depending on the oxidative stress inducing agent, CAD1/YAP2 can undergo two distinct conformational changes, both through oxidation of cysteine residues, and both masking the nuclear export signal, thus abolishing nuclear export by CRM1/exportin 1. Peroxide stress induces the formation of possible intramolecular disulfide bonds as well as intermolcular disulfide within a homodimer. Cadmium may bind directly to specific cysteine residues (Cys-391 and either Cys-356 or Cys-387) in the c-CRD.

It localises to the cytoplasm. It is found in the nucleus. Functionally, transcription activator involved in oxidative stress response and cadmium resistance. Regulates the transcription of genes overrepresented for the function of stabilizing proteins including the inducible Hsp90-family protein HSP82. Preferentially binds to promoters with the core binding site 5'-TTA[CG]TAA-3'. Activity of the transcription factor is controlled through oxidation of specific cysteine residues resulting in the alteration of its subcellular location. Activation by alkyl hydroperoxides or cadmium induces nuclear accumulation and as a result CAD1/YAP2 transcriptional activity. The sequence is that of AP-1-like transcription factor YAP2 from Saccharomyces cerevisiae (strain ATCC 204508 / S288c) (Baker's yeast).